Here is a 280-residue protein sequence, read N- to C-terminus: Acetylglutamate kinase (280 aa).

Residues 64–65, R86, and N177 each bind substrate; that span reads GG.

It belongs to the acetylglutamate kinase family. ArgB subfamily.

It is found in the cytoplasm. The catalysed reaction is N-acetyl-L-glutamate + ATP = N-acetyl-L-glutamyl 5-phosphate + ADP. It functions in the pathway amino-acid biosynthesis; L-arginine biosynthesis; N(2)-acetyl-L-ornithine from L-glutamate: step 2/4. Catalyzes the ATP-dependent phosphorylation of N-acetyl-L-glutamate. In Nautilia profundicola (strain ATCC BAA-1463 / DSM 18972 / AmH), this protein is Acetylglutamate kinase.